The following is a 353-amino-acid chain: S-adenosylmethionine:tRNA ribosyltransferase-isomerase (353 aa).

Belongs to the QueA family. In terms of assembly, monomer.

It is found in the cytoplasm. It catalyses the reaction 7-aminomethyl-7-carbaguanosine(34) in tRNA + S-adenosyl-L-methionine = epoxyqueuosine(34) in tRNA + adenine + L-methionine + 2 H(+). It functions in the pathway tRNA modification; tRNA-queuosine biosynthesis. Its function is as follows. Transfers and isomerizes the ribose moiety from AdoMet to the 7-aminomethyl group of 7-deazaguanine (preQ1-tRNA) to give epoxyqueuosine (oQ-tRNA). The polypeptide is S-adenosylmethionine:tRNA ribosyltransferase-isomerase (Burkholderia vietnamiensis (strain G4 / LMG 22486) (Burkholderia cepacia (strain R1808))).